A 528-amino-acid polypeptide reads, in one-letter code: Ribonuclease Y (528 aa).

Residues S15–F35 form a helical membrane-spanning segment. The 61-residue stretch at N217–L277 folds into the KH domain. In terms of domain architecture, HD spans V343 to A436.

It belongs to the RNase Y family.

The protein resides in the cell membrane. Functionally, endoribonuclease that initiates mRNA decay. The polypeptide is Ribonuclease Y (Onion yellows phytoplasma (strain OY-M)).